Here is a 440-residue protein sequence, read N- to C-terminus: MDPPCSLSASFEGSFAYLTVRDRLPQILTKVIDTVHRNKHKFFEDHGEEGVEAEKRALSFFSKLRNEMQTNKPVLPLTDNQLDTELWNQYLDYQKSLLNEGETPSWFKSPWLYVECYMYRRIQEGIVLSPPISKYDVFREGKIESFFQSQPAIIALCTYLQELKKNMAALSENQKQEELYKLLQVCLWGNKCDLSISGGLDNSQKFSILSSLESFRPFILVNDMESVLSVLLESKNPESGKELMKRVDIVLDNAGFELITDFVLADALLSFRLASEVHFHGKCMPWFVSDTTKHDFNWTIKQLQAANHKWMSKCGGNWKENLKKSHWIYHEHPFWTLPHEFCMMAQTAPDLYSELQKSDLVIFKGDLNYRKLTGDRKWDFTVPFSEALTTFHPAPLCSIRTLKADVQVGLKAGIGEQLFSTEPDWMISGKYGVVQLSTSV.

Residues Asp-252 and Asn-253 each contribute to the Mn(2+) site. Position 252 to 253 (252 to 253) interacts with substrate; it reads DN. S-adenosyl-L-methionine-binding residues include Glu-257 and Asp-290. Residue Asp-290 coordinates Mn(2+). Substrate-binding positions include 366 to 370 and Lys-403; that span reads DLNYR. The Subfamily III RTxK motif signature appears at 400–403; the sequence is RTLK.

It belongs to the damage-control phosphatase family. Sugar phosphate phosphatase III subfamily. Mn(2+) serves as cofactor. Requires Ni(2+) as cofactor. Automethylated.

It catalyses the reaction beta-D-fructose 1-phosphate + H2O = D-fructose + phosphate. It carries out the reaction beta-D-fructose 6-phosphate = dihydroxyacetone + D-glyceraldehyde 3-phosphate. The catalysed reaction is L-glutamyl-[protein] + S-adenosyl-L-methionine = [protein]-L-glutamate 5-O-methyl ester + S-adenosyl-L-homocysteine. In terms of biological role, metal-dependent phosphatase that shows phosphatase activity against several substrates, including fructose-1-phosphate and fructose-6-phosphate. Its preference for fructose-1-phosphate, a strong glycating agent that causes DNA damage rather than a canonical yeast metabolite, suggests a damage-control function in hexose phosphate metabolism. Has also been shown to have O-methyltransferase activity that methylates glutamate residues of target proteins to form gamma-glutamyl methyl ester residues. Possibly methylates PCNA, suggesting it is involved in the DNA damage response. This Xenopus laevis (African clawed frog) protein is Damage-control phosphatase ARMT1.